Reading from the N-terminus, the 194-residue chain is Phosphoheptose isomerase (194 aa).

An SIS domain is found at 34–188 (LANIFTKGKK…IEGVERIMFP (155 aa)). 49–51 (NGG) lines the substrate pocket. Residues His58 and Glu62 each contribute to the Zn(2+) site. Substrate-binding positions include Glu62, 90–91 (ND), 116–118 (STS), Ser121, and Gln168. Gln168 and His176 together coordinate Zn(2+).

It belongs to the SIS family. GmhA subfamily. It depends on Zn(2+) as a cofactor.

The protein resides in the cytoplasm. The catalysed reaction is 2 D-sedoheptulose 7-phosphate = D-glycero-alpha-D-manno-heptose 7-phosphate + D-glycero-beta-D-manno-heptose 7-phosphate. The protein operates within carbohydrate biosynthesis; D-glycero-D-manno-heptose 7-phosphate biosynthesis; D-glycero-alpha-D-manno-heptose 7-phosphate and D-glycero-beta-D-manno-heptose 7-phosphate from sedoheptulose 7-phosphate: step 1/1. Its function is as follows. Catalyzes the isomerization of sedoheptulose 7-phosphate in D-glycero-D-manno-heptose 7-phosphate. This Fusobacterium nucleatum subsp. nucleatum (strain ATCC 25586 / DSM 15643 / BCRC 10681 / CIP 101130 / JCM 8532 / KCTC 2640 / LMG 13131 / VPI 4355) protein is Phosphoheptose isomerase.